We begin with the raw amino-acid sequence, 198 residues long: MTKKTLAFASGSDHKTKEMQMLLSPFGYEIVTPKILGIPFSPEETESTFVGNSFIKSKELFRLTGFPSFADDSGISVDALGGEPGVLSARFGGPGLSDKDRALYLLNKLGTNHNRKAHYSCVVSFVDANHQVSFEGKVEGLIASDYDELGKFGFGYDPIFYYPEFGKRFSEVPEGEKNKVSHRKKAMELFLEWFQTIQ.

Residue 10-15 (SGSDHK) coordinates substrate. Residues glutamate 43 and aspartate 72 each coordinate Mg(2+). Aspartate 72 functions as the Proton acceptor in the catalytic mechanism. Substrate contacts are provided by residues serine 73, 154 to 157 (FGYD), lysine 177, and 182 to 183 (HR).

It belongs to the HAM1 NTPase family. In terms of assembly, homodimer. It depends on Mg(2+) as a cofactor.

It catalyses the reaction XTP + H2O = XMP + diphosphate + H(+). It carries out the reaction dITP + H2O = dIMP + diphosphate + H(+). The enzyme catalyses ITP + H2O = IMP + diphosphate + H(+). Functionally, pyrophosphatase that catalyzes the hydrolysis of nucleoside triphosphates to their monophosphate derivatives, with a high preference for the non-canonical purine nucleotides XTP (xanthosine triphosphate), dITP (deoxyinosine triphosphate) and ITP. Seems to function as a house-cleaning enzyme that removes non-canonical purine nucleotides from the nucleotide pool, thus preventing their incorporation into DNA/RNA and avoiding chromosomal lesions. This is dITP/XTP pyrophosphatase from Leptospira biflexa serovar Patoc (strain Patoc 1 / Ames).